A 253-amino-acid polypeptide reads, in one-letter code: Putative glutamine amidotransferase PB2B2.05 (253 aa).

Residues 5–228 form the Glutamine amidotransferase type-1 domain; that stretch reads IIALSVGFSN…INRSKWHMKQ (224 aa). The active-site Nucleophile is the cysteine 100. Catalysis depends on residues histidine 200 and glutamate 202.

The protein resides in the cytoplasm. It localises to the nucleus. This is Putative glutamine amidotransferase PB2B2.05 from Schizosaccharomyces pombe (strain 972 / ATCC 24843) (Fission yeast).